Here is a 330-residue protein sequence, read N- to C-terminus: AH receptor-interacting protein (330 aa).

Residue serine 43 is modified to Phosphoserine. The 93-residue stretch at 54-146 (RVRGKPMELI…DLDALQQNPQ (93 aa)) folds into the PPIase FKBP-type domain. TPR repeat units follow at residues 179-212 (VPLI…LKNL), 231-264 (TPLL…YDDN), and 265-298 (VKAY…DPAL).

In terms of assembly, interacts with RET in the pituitary gland; this interaction prevents the formation of the AIP-survivin complex.

The protein localises to the cytoplasm. Its function is as follows. May play a positive role in AHR-mediated (aromatic hydrocarbon receptor) signaling, possibly by influencing its receptivity for ligand and/or its nuclear targeting. In terms of biological role, cellular negative regulator of the hepatitis B virus (HBV) X protein. This is AH receptor-interacting protein (AIP) from Chlorocebus aethiops (Green monkey).